A 369-amino-acid polypeptide reads, in one-letter code: Tetratricopeptide repeat protein 19 homolog, mitochondrial (369 aa).

5 TPR repeats span residues 97 to 130 (LIKT…AQDI), 137 to 170 (TYVF…LFAE), 228 to 261 (GLTK…LINV), 270 to 303 (VTIL…TKEL), and 310 to 343 (GILQ…GKQH).

The protein belongs to the TTC19 family.

The protein resides in the mitochondrion. Its function is as follows. Required for mitochondrial complex III formation. The sequence is that of Tetratricopeptide repeat protein 19 homolog, mitochondrial (Ttc19) from Drosophila melanogaster (Fruit fly).